The following is a 316-amino-acid chain: uncharacterized protein (316 aa).

Residues 26-98 (ERIDRFLAGA…IPLDVVYEDA (73 aa)) enclose the S4 RNA-binding domain. D148 is a catalytic residue.

This sequence belongs to the pseudouridine synthase RluA family.

The enzyme catalyses a uridine in RNA = a pseudouridine in RNA. This is an uncharacterized protein from Chloroflexus aurantiacus (strain ATCC 29366 / DSM 635 / J-10-fl).